The primary structure comprises 475 residues: Aspartyl/glutamyl-tRNA(Asn/Gln) amidotransferase subunit B (475 aa).

This sequence belongs to the GatB/GatE family. GatB subfamily. Heterotrimer of A, B and C subunits.

It catalyses the reaction L-glutamyl-tRNA(Gln) + L-glutamine + ATP + H2O = L-glutaminyl-tRNA(Gln) + L-glutamate + ADP + phosphate + H(+). The enzyme catalyses L-aspartyl-tRNA(Asn) + L-glutamine + ATP + H2O = L-asparaginyl-tRNA(Asn) + L-glutamate + ADP + phosphate + 2 H(+). Functionally, allows the formation of correctly charged Asn-tRNA(Asn) or Gln-tRNA(Gln) through the transamidation of misacylated Asp-tRNA(Asn) or Glu-tRNA(Gln) in organisms which lack either or both of asparaginyl-tRNA or glutaminyl-tRNA synthetases. The reaction takes place in the presence of glutamine and ATP through an activated phospho-Asp-tRNA(Asn) or phospho-Glu-tRNA(Gln). This is Aspartyl/glutamyl-tRNA(Asn/Gln) amidotransferase subunit B from Mycoplasma mobile (strain ATCC 43663 / 163K / NCTC 11711) (Mesomycoplasma mobile).